The following is a 213-amino-acid chain: Thiamine-phosphate synthase (213 aa).

4-amino-2-methyl-5-(diphosphooxymethyl)pyrimidine-binding positions include 42-46 and aspartate 77; that span reads QYREK. Positions 78 and 97 each coordinate Mg(2+). Serine 116 lines the 4-amino-2-methyl-5-(diphosphooxymethyl)pyrimidine pocket. 142–144 contacts 2-[(2R,5Z)-2-carboxy-4-methylthiazol-5(2H)-ylidene]ethyl phosphate; it reads TIS. Position 145 (lysine 145) interacts with 4-amino-2-methyl-5-(diphosphooxymethyl)pyrimidine. Residues glycine 173 and 193-194 contribute to the 2-[(2R,5Z)-2-carboxy-4-methylthiazol-5(2H)-ylidene]ethyl phosphate site; that span reads IS.

The protein belongs to the thiamine-phosphate synthase family. Mg(2+) is required as a cofactor.

The catalysed reaction is 2-[(2R,5Z)-2-carboxy-4-methylthiazol-5(2H)-ylidene]ethyl phosphate + 4-amino-2-methyl-5-(diphosphooxymethyl)pyrimidine + 2 H(+) = thiamine phosphate + CO2 + diphosphate. It catalyses the reaction 2-(2-carboxy-4-methylthiazol-5-yl)ethyl phosphate + 4-amino-2-methyl-5-(diphosphooxymethyl)pyrimidine + 2 H(+) = thiamine phosphate + CO2 + diphosphate. It carries out the reaction 4-methyl-5-(2-phosphooxyethyl)-thiazole + 4-amino-2-methyl-5-(diphosphooxymethyl)pyrimidine + H(+) = thiamine phosphate + diphosphate. It functions in the pathway cofactor biosynthesis; thiamine diphosphate biosynthesis; thiamine phosphate from 4-amino-2-methyl-5-diphosphomethylpyrimidine and 4-methyl-5-(2-phosphoethyl)-thiazole: step 1/1. Functionally, condenses 4-methyl-5-(beta-hydroxyethyl)thiazole monophosphate (THZ-P) and 2-methyl-4-amino-5-hydroxymethyl pyrimidine pyrophosphate (HMP-PP) to form thiamine monophosphate (TMP). The chain is Thiamine-phosphate synthase from Limosilactobacillus fermentum (strain NBRC 3956 / LMG 18251) (Lactobacillus fermentum).